The following is a 491-amino-acid chain: Ribulose-1,5 bisphosphate carboxylase/oxygenase large subunit N-methyltransferase, chloroplastic (491 aa).

Positions 67–291 (EGVVTTKTPV…AGDQLFIQYD (225 aa)) constitute an SET domain.

It belongs to the class V-like SAM-binding methyltransferase superfamily. Plant protein-lysine LSMT methyltransferase family.

Its subcellular location is the plastid. It localises to the chloroplast. The enzyme catalyses L-lysyl-[ribulose-1,5-bisphosphate carboxylase] + 3 S-adenosyl-L-methionine = N(6),N(6),N(6)-trimethyl-L-lysyl-[ribulose-1,5-bisphosphate carboxylase] + 3 S-adenosyl-L-homocysteine + 3 H(+). In terms of biological role, methylates 'Lys-14' of the large subunit of RuBisCO. The sequence is that of Ribulose-1,5 bisphosphate carboxylase/oxygenase large subunit N-methyltransferase, chloroplastic (RBCMT) from Nicotiana tabacum (Common tobacco).